Here is a 211-residue protein sequence, read N- to C-terminus: Protein-L-isoaspartate O-methyltransferase 2 (211 aa).

Residue Ser61 is part of the active site.

Belongs to the methyltransferase superfamily. L-isoaspartyl/D-aspartyl protein methyltransferase family.

The protein localises to the cytoplasm. The enzyme catalyses [protein]-L-isoaspartate + S-adenosyl-L-methionine = [protein]-L-isoaspartate alpha-methyl ester + S-adenosyl-L-homocysteine. Its function is as follows. Catalyzes the methyl esterification of L-isoaspartyl residues in peptides and proteins that result from spontaneous decomposition of normal L-aspartyl and L-asparaginyl residues. It plays a role in the repair and/or degradation of damaged proteins. The chain is Protein-L-isoaspartate O-methyltransferase 2 from Polaromonas sp. (strain JS666 / ATCC BAA-500).